A 191-amino-acid chain; its full sequence is Gamma-glutamylaminecyclotransferase B (191 aa).

7-10 contributes to the substrate binding site; that stretch reads YGTL. The active-site Proton acceptor is the Glu82. Polar residues predominate over residues 155–178; that stretch reads SADFSQNSEQEIKKNNSLQILTST. Residues 155–191 are disordered; the sequence is SADFSQNSEQEIKKNNSLQILTSTGDDHDVNFRGPLQ.

Belongs to the gamma-glutamylcyclotransferase family.

The enzyme catalyses epsilon-(gamma-L-glutamyl)-L-lysine = 5-oxo-L-proline + L-lysine. May contribute to degradation of proteins cross-linked by transglutaminases by degrading the cross-link between a lysine and a glutamic acid residue. Catalyzes the formation of 5-oxo-L-proline from L-gamma-glutamyl-L-epsilon-lysine. The protein is Gamma-glutamylaminecyclotransferase B (ggact.2) of Danio rerio (Zebrafish).